A 567-amino-acid polypeptide reads, in one-letter code: 2-succinyl-5-enolpyruvyl-6-hydroxy-3-cyclohexene-1-carboxylate synthase (567 aa).

Belongs to the TPP enzyme family. MenD subfamily. In terms of assembly, homodimer. Requires Mg(2+) as cofactor. It depends on Mn(2+) as a cofactor. Thiamine diphosphate serves as cofactor.

The catalysed reaction is isochorismate + 2-oxoglutarate + H(+) = 5-enolpyruvoyl-6-hydroxy-2-succinyl-cyclohex-3-ene-1-carboxylate + CO2. It participates in quinol/quinone metabolism; 1,4-dihydroxy-2-naphthoate biosynthesis; 1,4-dihydroxy-2-naphthoate from chorismate: step 2/7. It functions in the pathway quinol/quinone metabolism; menaquinone biosynthesis. Functionally, catalyzes the thiamine diphosphate-dependent decarboxylation of 2-oxoglutarate and the subsequent addition of the resulting succinic semialdehyde-thiamine pyrophosphate anion to isochorismate to yield 2-succinyl-5-enolpyruvyl-6-hydroxy-3-cyclohexene-1-carboxylate (SEPHCHC). This Yersinia pseudotuberculosis serotype I (strain IP32953) protein is 2-succinyl-5-enolpyruvyl-6-hydroxy-3-cyclohexene-1-carboxylate synthase.